Consider the following 628-residue polypeptide: ATP-dependent zinc metalloprotease FtsH (628 aa).

The Stromal portion of the chain corresponds to 1–7; it reads MKLSWKT. The helical transmembrane segment at 8 to 28 threads the bilayer; the sequence is LLLWSLPIFVIGFFFWQGFLG. At 29 to 118 the chain is on the lumenal side; that stretch reads PTTTDVGSNI…AHPPKSTSAV (90 aa). The chain crosses the membrane as a helical span at residues 119-139; sequence WGLLGNLLFPLLLVGGLAFLF. The Stromal segment spans residues 140-628; it reads RRSNNASGGP…PEKNYYISQF (489 aa). 213–220 contacts ATP; the sequence is GPPGTGKT. His-434 serves as a coordination point for Zn(2+). The active site involves Glu-435. 2 residues coordinate Zn(2+): His-438 and Asp-512.

In the central section; belongs to the AAA ATPase family. The protein in the C-terminal section; belongs to the peptidase M41 family. In terms of assembly, homohexamer. It depends on Zn(2+) as a cofactor.

The protein localises to the plastid. The protein resides in the chloroplast thylakoid membrane. In terms of biological role, acts as a processive, ATP-dependent zinc metallopeptidase. This is ATP-dependent zinc metalloprotease FtsH from Pyropia yezoensis (Susabi-nori).